We begin with the raw amino-acid sequence, 229 residues long: Ras-related protein RabZ (229 aa).

A disordered region spans residues 1–39 (MGCFHSREPTATGKTKKEEPTSAVKTNKEEKSSNYVSEP). G2 carries N-myristoyl glycine lipidation. C3 carries S-palmitoyl cysteine lipidation. Residues 15 to 32 (TKKEEPTSAVKTNKEEKS) show a composition bias toward basic and acidic residues. A GTP-binding site is contributed by 57 to 64 (GDQATGKS). Residues 79 to 88 (HKPSPIIIDC) carry the Effector region motif. Residues 106 to 110 (DTAGQ) and 164 to 167 (NKCD) each bind GTP.

It belongs to the small GTPase superfamily. Rab family. Although this sequence lacks the C-terminal cysteine motifs subject to isoprenylation in other Rab proteins, it does have N-terminal myristoylation and S-palmitoylation sequence motifs.

This chain is Ras-related protein RabZ (rabZ), found in Dictyostelium discoideum (Social amoeba).